We begin with the raw amino-acid sequence, 508 residues long: GMP synthase [glutamine-hydrolyzing] (508 aa).

In terms of domain architecture, Glutamine amidotransferase type-1 spans 1–189 (MILVLDFGSQ…ALLVCGCEKT (189 aa)). The active-site Nucleophile is the Cys-78. Residues His-163 and Glu-165 contribute to the active site. The 194-residue stretch at 190-383 (WGMQHFAQRE…LGVSQDFLMH (194 aa)) folds into the GMPS ATP-PPase domain. 217–223 (SGGVDST) contributes to the ATP binding site.

In terms of assembly, homodimer.

It catalyses the reaction XMP + L-glutamine + ATP + H2O = GMP + L-glutamate + AMP + diphosphate + 2 H(+). Its pathway is purine metabolism; GMP biosynthesis; GMP from XMP (L-Gln route): step 1/1. In terms of biological role, catalyzes the synthesis of GMP from XMP. This Helicobacter pylori (strain G27) protein is GMP synthase [glutamine-hydrolyzing].